A 308-amino-acid polypeptide reads, in one-letter code: Secreted frizzled-related protein 1 (308 aa).

The signal sequence occupies residues 1–25; the sequence is MGGGRWAAAGALLALAAGLLAAGSA. Residues 47–163 enclose the FZ domain; the sequence is TKPPQCVDIP…FPEGDVCIAM (117 aa). 5 disulfides stabilise this stretch: C52–C115, C62–C108, C99–C134, C123–C160, and C127–C151. N167 carries N-linked (GlcNAc...) asparagine glycosylation. 3 disulfide bridges follow: C180-C250, C183-C252, and C197-C300. Residues 180–300 form the NTR domain; sequence CPPCDNELKS…FMKKMKNHEC (121 aa).

The protein belongs to the secreted frizzled-related protein (sFRP) family. In terms of assembly, interacts with WNT1, WNT2, WNT4, WNT8, MYOC and FRZD6. Highest levels in aortic endothelium, heart, spleen and eye. Lower levels in lung, brain and kidney. Weak expression in liver, skeletal muscle and the medial layer of the aorta. In the cortical brain, localized to neurons and small blood vessels. In the retina, localized to the inner and outer nuclear layers with high expression in the neuronal cell bodies. In the heart, restricted to myocytes. In lung, highest expression found in the epithelium of terminal bronchioles. In kidney, localized to the epithelium of collecting ducts of the medulla and, in spleen, expression restricted to the red pulp in cells associated with the sinuses.

The protein resides in the secreted. In terms of biological role, soluble frizzled-related proteins (sFRPS) function as modulators of Wnt signaling through direct interaction with Wnts. They have a role in regulating cell growth and differentiation in specific cell types. SFRP1 decreases intracellular beta-catenin levels. Has antiproliferative effects on vascular cells, in vitro and in vivo, and can induce, in vivo, an angiogenic response. In vascular cell cycle, delays the G1 phase and entry into the S phase. In kidney development, inhibits tubule formation and bud growth in metanephroi. Inhibits WNT1/WNT4-mediated TCF-dependent transcription. The polypeptide is Secreted frizzled-related protein 1 (SFRP1) (Bos taurus (Bovine)).